We begin with the raw amino-acid sequence, 429 residues long: Large ribosomal subunit protein mL37 (429 aa).

The transit peptide at 1 to 29 (MALRPVVLRRAPAHSRGILTRPGPPRPRG) directs the protein to the mitochondrion. Residues 12-45 (PAHSRGILTRPGPPRPRGPLPRTPWTTRGPPPDQ) form a disordered region. Residues 22 to 33 (PGPPRPRGPLPR) are compositionally biased toward pro residues.

The protein belongs to the mitochondrion-specific ribosomal protein mL37 family. In terms of assembly, component of the mitochondrial ribosome large subunit (39S) which comprises a 16S rRNA and about 50 distinct proteins.

Its subcellular location is the mitochondrion. This Gallus gallus (Chicken) protein is Large ribosomal subunit protein mL37 (MRPL37).